Here is a 182-residue protein sequence, read N- to C-terminus: CASP-like protein 2B1 (182 aa).

Topologically, residues 1–12 are cytoplasmic; it reads MKLIDRRMRLTE. A helical transmembrane segment spans residues 13–31; sequence LLLRCSISVFALLALILVV. At 32–52 the chain is on the extracellular side; that stretch reads TDTEVKLIFTIKKTAKYTDMK. Residues 53 to 73 form a helical membrane-spanning segment; the sequence is AVVFLVVANGIAAVYSLLQSV. The Cytoplasmic portion of the chain corresponds to 74–89; sequence RCVVGTMKGKVLFSKP. Residues 90–110 traverse the membrane as a helical segment; the sequence is LAWAFFSGDQAMAYLNVAAIA. The Extracellular portion of the chain corresponds to 111–141; that stretch reads ATAESGVIAREGEEDLQWMRVCTMYGKFCNQ. The helical transmembrane segment at 142-162 threads the bilayer; it reads MAIGVSSALLASIAMVFVSCI. The Cytoplasmic portion of the chain corresponds to 163 to 182; sequence SAFSLFRLYGATKDRRTTPW.

The protein belongs to the Casparian strip membrane proteins (CASP) family. In terms of assembly, homodimer and heterodimers.

The protein resides in the cell membrane. In Arabidopsis thaliana (Mouse-ear cress), this protein is CASP-like protein 2B1.